We begin with the raw amino-acid sequence, 146 residues long: Basic phospholipase A2 (146 aa).

A signal peptide spans 1–21 (MYPAHLLVLLAVCVSLLGAAS). Positions 22 to 27 (IPPLPL) are excised as a propeptide. Intrachain disulfides connect cysteine 38-cysteine 98, cysteine 54-cysteine 145, cysteine 56-cysteine 72, cysteine 71-cysteine 126, cysteine 78-cysteine 119, cysteine 87-cysteine 112, and cysteine 105-cysteine 117. Residues tyrosine 55, glycine 57, and glycine 59 each contribute to the Ca(2+) site. Histidine 75 is a catalytic residue. Aspartate 76 contacts Ca(2+). Residue aspartate 120 is part of the active site.

Belongs to the phospholipase A2 family. Group I subfamily. D49 sub-subfamily. Ca(2+) serves as cofactor. In terms of tissue distribution, expressed by the venom gland.

The protein localises to the secreted. It catalyses the reaction a 1,2-diacyl-sn-glycero-3-phosphocholine + H2O = a 1-acyl-sn-glycero-3-phosphocholine + a fatty acid + H(+). Functionally, snake venom phospholipase A2 (PLA2) that inhibits neuromuscular transmission by blocking acetylcholine release from the nerve termini. PLA2 catalyzes the calcium-dependent hydrolysis of the 2-acyl groups in 3-sn-phosphoglycerides. This is Basic phospholipase A2 from Hydrophis hardwickii (Hardwick's spine-bellied seasnake).